Consider the following 257-residue polypeptide: Putative hydro-lyase Bamb_5282 (257 aa).

The protein belongs to the D-glutamate cyclase family.

This is Putative hydro-lyase Bamb_5282 from Burkholderia ambifaria (strain ATCC BAA-244 / DSM 16087 / CCUG 44356 / LMG 19182 / AMMD) (Burkholderia cepacia (strain AMMD)).